Consider the following 187-residue polypeptide: Plasmodium-specific hydrophobic abundant protein (187 aa).

The N-terminal stretch at 1–18 (MMKYVFVALCLFAVVALA) is a signal peptide.

To HAP-S protein.

It is found in the membrane. This is Plasmodium-specific hydrophobic abundant protein from Physarum polycephalum (Slime mold).